A 192-amino-acid polypeptide reads, in one-letter code: Zinc finger CCHC domain-containing protein 10 (192 aa).

The segment at Val-43 to Gly-60 adopts a CCHC-type zinc-finger fold. Positions Gln-89 to Lys-192 are disordered. Low complexity-rich tracts occupy residues Thr-109 to Ser-136 and Ser-144 to Ser-179.

This chain is Zinc finger CCHC domain-containing protein 10 (ZCCHC10), found in Homo sapiens (Human).